A 568-amino-acid chain; its full sequence is Autophagy-related protein 17 (568 aa).

2 disordered regions span residues 1–59 (MASF…DSSE) and 522–568 (SYEM…ERPF). Residues 522–546 (SYEMEAHGEPENEGKVETAYERETE) are compositionally biased toward basic and acidic residues.

It belongs to the ATG17 family.

Its subcellular location is the cytoplasm. It localises to the preautophagosomal structure membrane. Autophagy-specific protein that functions in response to autophagy-inducing signals as a scaffold to recruit other ATG proteins to organize pre-autophagosomal structure (PAS) formation. Modulates the timing and magnitude of the autophagy response, such as the size of the sequestering vesicles. Plays particularly a role in pexophagy and nucleophagy. The sequence is that of Autophagy-related protein 17 (apg-9) from Neurospora crassa (strain ATCC 24698 / 74-OR23-1A / CBS 708.71 / DSM 1257 / FGSC 987).